A 512-amino-acid chain; its full sequence is D-alanine--D-alanyl carrier protein ligase (512 aa).

Residue 152-153 participates in ATP binding; sequence TS. Asp199 lines the D-alanine pocket. 294–299 provides a ligand contact to ATP; sequence NAYGPT. Val303 lines the D-alanine pocket. Residues Asp385, 397-400, and Lys499 each bind ATP; that span reads YGGR. Lys499 provides a ligand contact to D-alanine.

Belongs to the ATP-dependent AMP-binding enzyme family. DltA subfamily.

The protein resides in the cytoplasm. The catalysed reaction is holo-[D-alanyl-carrier protein] + D-alanine + ATP = D-alanyl-[D-alanyl-carrier protein] + AMP + diphosphate. It participates in cell wall biogenesis; lipoteichoic acid biosynthesis. Catalyzes the first step in the D-alanylation of lipoteichoic acid (LTA), the activation of D-alanine and its transfer onto the D-alanyl carrier protein (Dcp) DltC. In an ATP-dependent two-step reaction, forms a high energy D-alanyl-AMP intermediate, followed by transfer of the D-alanyl residue as a thiol ester to the phosphopantheinyl prosthetic group of the Dcp. D-alanylation of LTA plays an important role in modulating the properties of the cell wall in Gram-positive bacteria, influencing the net charge of the cell wall. The chain is D-alanine--D-alanyl carrier protein ligase from Streptococcus pyogenes serotype M3 (strain SSI-1).